The sequence spans 324 residues: Glyoxylate/hydroxypyruvate reductase B (324 aa).

Active-site residues include R237 and E266. H285 acts as the Proton donor in catalysis.

The protein belongs to the D-isomer specific 2-hydroxyacid dehydrogenase family. GhrB subfamily. In terms of assembly, homodimer.

It is found in the cytoplasm. The enzyme catalyses glycolate + NADP(+) = glyoxylate + NADPH + H(+). The catalysed reaction is (R)-glycerate + NAD(+) = 3-hydroxypyruvate + NADH + H(+). It carries out the reaction (R)-glycerate + NADP(+) = 3-hydroxypyruvate + NADPH + H(+). Functionally, catalyzes the NADPH-dependent reduction of glyoxylate and hydroxypyruvate into glycolate and glycerate, respectively. The chain is Glyoxylate/hydroxypyruvate reductase B from Escherichia coli O9:H4 (strain HS).